The chain runs to 336 residues: Succinylglutamate desuccinylase (336 aa).

Residues His59, Glu62, and His151 each coordinate Zn(2+). Glu215 is a catalytic residue.

This sequence belongs to the AspA/AstE family. Succinylglutamate desuccinylase subfamily. The cofactor is Zn(2+).

It carries out the reaction N-succinyl-L-glutamate + H2O = L-glutamate + succinate. It participates in amino-acid degradation; L-arginine degradation via AST pathway; L-glutamate and succinate from L-arginine: step 5/5. Its function is as follows. Transforms N(2)-succinylglutamate into succinate and glutamate. The protein is Succinylglutamate desuccinylase of Pseudomonas fluorescens (strain Pf0-1).